Reading from the N-terminus, the 169-residue chain is Cell division inhibitor SulA (169 aa).

Residues 106 to 112 are ftsZ binding; that stretch reads ALRTGNY. The interval 162–169 is lon protease binding; that stretch reads KIHSNLYH.

Belongs to the SulA family. As to quaternary structure, interacts with FtsZ. Post-translationally, is rapidly cleaved and degraded by the Lon protease once DNA damage is repaired.

Its function is as follows. Component of the SOS system and an inhibitor of cell division. Accumulation of SulA causes rapid cessation of cell division and the appearance of long, non-septate filaments. In the presence of GTP, binds a polymerization-competent form of FtsZ in a 1:1 ratio, thus inhibiting FtsZ polymerization and therefore preventing it from participating in the assembly of the Z ring. This mechanism prevents the premature segregation of damaged DNA to daughter cells during cell division. This Salmonella gallinarum (strain 287/91 / NCTC 13346) protein is Cell division inhibitor SulA.